A 279-amino-acid chain; its full sequence is Fructose-1,6-bisphosphatase class 1 (279 aa).

Mg(2+)-binding residues include Glu-65, Asp-85, Leu-87, and Asp-88. Substrate-binding positions include 88–91 (DGSS), Tyr-190, and Lys-221. Position 227 (Glu-227) interacts with Mg(2+).

The protein belongs to the FBPase class 1 family. As to quaternary structure, homotetramer. It depends on Mg(2+) as a cofactor.

The protein resides in the cytoplasm. The catalysed reaction is beta-D-fructose 1,6-bisphosphate + H2O = beta-D-fructose 6-phosphate + phosphate. It functions in the pathway carbohydrate biosynthesis; gluconeogenesis. This chain is Fructose-1,6-bisphosphatase class 1, found in Helicobacter hepaticus (strain ATCC 51449 / 3B1).